The following is a 338-amino-acid chain: Acyl-CoA-binding domain-containing protein 1 (338 aa).

Residues 11-31 (IIFGLIFAYLLAKLISILLAF) form a helical; Signal-anchor membrane-spanning segment. Asn-35 and Asn-41 each carry an N-linked (GlcNAc...) asparagine glycan. A disordered region spans residues 69 to 89 (AEQGSLRGDEDESDDDDWEGV). Residues 77–89 (DEDESDDDDWEGV) are compositionally biased toward acidic residues. The ACB domain maps to 94–184 (LDEAFSAATA…VTQLYPAWVE (91 aa)). An acyl-CoA is bound by residues 126–130 (YGLYK), Lys-152, and Tyr-171. Residue Asn-191 is glycosylated (N-linked (GlcNAc...) asparagine). ANK repeat units lie at residues 217–246 (LKIDAIHAFAREGEVENLLKCIENGIPVNA), 250–279 (EGRTPLHWAIDRGHLNVAEALVDKNADVNA), 283–312 (EGQTSLHYAVVCEREALAEFLVKQKADTTI), and 316–338 (DGNSPLDLCESEWSWMREKKDSN).

The protein belongs to the ACBP family. In terms of assembly, interacts with RAP2-12. Binds to SMO1-1 and SMO1-2. In terms of processing, glycosylated. In seeds, localized in the outer integument. As to expression, expressed at low levels in roots, stems, leaves, flowers, and siliques, especially within seeds.

The protein localises to the cell membrane. It localises to the secreted. Its subcellular location is the cell wall. It is found in the endoplasmic reticulum membrane. Functionally, binds medium- and long-chain acyl-CoA esters with very high affinity. Can interact in vitro with arachidonyl-CoA, barely with oleoyl-CoA, but not with palmitoyl-CoA. Confers tolerance and binds to lead ions Pb(2+), probably by promoting lead translocation from roots to shoots. May function as an intracellular carrier of acyl-CoA esters. Modulates negatively sterol synthesis during embryogenesis and gametophytes development via interactions with SMO1-1 and SMO1-2; sterols serve as lipid modulators for gene expression of homeodomain-leucine zipper IV transcription factors. The protein is Acyl-CoA-binding domain-containing protein 1 of Arabidopsis thaliana (Mouse-ear cress).